A 353-amino-acid polypeptide reads, in one-letter code: UPF0283 membrane protein YcjF (353 aa).

Positions 1-19 (MSEPLKPRIDFAEPLKEEP) are enriched in basic and acidic residues. A disordered region spans residues 1 to 35 (MSEPLKPRIDFAEPLKEEPTSAFKAQQTFSEAESR). The next 3 membrane-spanning stretches (helical) occupy residues 70–90 (MVMG…VQWT), 100–120 (VALG…GSVV), and 213–233 (ESTL…FIAW).

It belongs to the UPF0283 family.

It localises to the cell inner membrane. The chain is UPF0283 membrane protein YcjF from Salmonella enteritidis PT4 (strain P125109).